We begin with the raw amino-acid sequence, 630 residues long: Golgin subfamily A member 8K (630 aa).

The tract at residues 1–76 (MAEETQHNKL…TSSATLKDLE (76 aa)) is disordered. Coiled-coil stretches lie at residues 86–148 (LDSR…LNTD) and 224–411 (LTQL…QQNQ). Positions 352 to 362 (KQEERIQEQHK) are enriched in basic and acidic residues. Disordered regions lie at residues 352 to 379 (KQEERIQEQHKSLQQLAKPQSVFEEPNN) and 424 to 444 (GEGHGEHLDSEGEEAPQPMPS).

It belongs to the GOLGA8 family.

This is Golgin subfamily A member 8K from Homo sapiens (Human).